The primary structure comprises 311 residues: Ferrochelatase (311 aa).

Positions 179 and 260 each coordinate Fe cation.

Belongs to the ferrochelatase family.

Its subcellular location is the cytoplasm. It carries out the reaction heme b + 2 H(+) = protoporphyrin IX + Fe(2+). The protein operates within porphyrin-containing compound metabolism; protoheme biosynthesis; protoheme from protoporphyrin-IX: step 1/1. Its function is as follows. Catalyzes the ferrous insertion into protoporphyrin IX. The chain is Ferrochelatase from Helicobacter hepaticus (strain ATCC 51449 / 3B1).